The sequence spans 294 residues: ATP synthase gamma chain (294 aa).

This sequence belongs to the ATPase gamma chain family. As to quaternary structure, F-type ATPases have 2 components, CF(1) - the catalytic core - and CF(0) - the membrane proton channel. CF(1) has five subunits: alpha(3), beta(3), gamma(1), delta(1), epsilon(1). CF(0) has three main subunits: a, b and c.

The protein resides in the cell inner membrane. Produces ATP from ADP in the presence of a proton gradient across the membrane. The gamma chain is believed to be important in regulating ATPase activity and the flow of protons through the CF(0) complex. This chain is ATP synthase gamma chain, found in Paraburkholderia xenovorans (strain LB400).